The sequence spans 401 residues: Splicing factor 45 (401 aa).

N-acetylserine is present on Ser2. A Phosphoserine modification is found at Ser2. Residue Lys15 forms a Glycyl lysine isopeptide (Lys-Gly) (interchain with G-Cter in SUMO2) linkage. N6-acetyllysine is present on Lys21. Glycyl lysine isopeptide (Lys-Gly) (interchain with G-Cter in SUMO2) cross-links involve residues Lys24 and Lys33. N6-acetyllysine; alternate is present on Lys41. Residue Lys41 forms a Glycyl lysine isopeptide (Lys-Gly) (interchain with G-Cter in SUMO2); alternate linkage. Over residues 57–68 (LKRGGSSDDRQI) the composition is skewed to basic and acidic residues. Disordered stretches follow at residues 57–84 (LKRG…DPVP) and 114–233 (RQRE…FLAN). Lys58 participates in a covalent cross-link: Glycyl lysine isopeptide (Lys-Gly) (interchain with G-Cter in SUMO2). Thr71 bears the Phosphothreonine mark. The segment covering 114–153 (RQREERQRQRELERQKEIEEREKRRKDRHEASGFARRPDP) has biased composition (basic and acidic residues). Phosphoserine occurs at positions 155 and 169. Positions 182-200 (VEKDKELPRDFPYEEDSRP) are enriched in basic and acidic residues. The residue at position 222 (Ser222) is a Phosphoserine. The G-patch domain maps to 235-283 (GGTVAHKIMQKYGFREGQGLGKHEQGLSTALSVEKTSKRGGKIIVGDAT). A Phosphothreonine modification is found at Thr237. Lys256 participates in a covalent cross-link: Glycyl lysine isopeptide (Lys-Gly) (interchain with G-Cter in SUMO2). Residue Ser266 is modified to Phosphoserine. Residue Lys276 forms a Glycyl lysine isopeptide (Lys-Gly) (interchain with G-Cter in SUMO2) linkage. Phosphoserine is present on residues Ser291 and Ser293. The RRM domain occupies 306-385 (VVLLRNMVGA…YFGGRVVKAC (80 aa)).

Binds SXL. Associates with the spliceosome. Interacts with SF3B1, SF1 and U2AF2.

Its subcellular location is the nucleus. Splice factor that binds to the single-stranded 3'AG at the exon/intron border and promotes its utilization in the second catalytic step. Involved in the regulation of alternative splicing and the utilization of cryptic splice sites. Promotes the utilization of a cryptic splice site created by the beta-110 mutation in the HBB gene. The resulting frameshift leads to sickle cell anemia. This is Splicing factor 45 (RBM17) from Homo sapiens (Human).